We begin with the raw amino-acid sequence, 146 residues long: Phospholipase A2 (146 aa).

The first 18 residues, Met-1–Gly-18, serve as a signal peptide directing secretion. 7 disulfide bridges follow: Cys-44-Cys-137, Cys-46-Cys-62, Cys-61-Cys-117, Cys-67-Cys-144, Cys-68-Cys-110, Cys-77-Cys-103, and Cys-95-Cys-108. Tyr-45, Gly-47, and Gly-49 together coordinate Ca(2+). His-65 is an active-site residue. Residue Asp-66 coordinates Ca(2+). A glycan (N-linked (GlcNAc...) asparagine) is linked at Asn-85. The active site involves Asp-111. N-linked (GlcNAc...) asparagine glycosylation is present at Asn-126.

It depends on Ca(2+) as a cofactor. In terms of processing, N-glycosylated. Glycosylated with mannose chains including Man2(GlcNAc), Man2(GlcNAc)2, Man2(GlcNAc)3, Man2(GlcNAc)4 and Man2(GlcNAc)5. In terms of tissue distribution, expressed by the skin glands (at protein level).

It is found in the secreted. It carries out the reaction a 1,2-diacyl-sn-glycero-3-phosphocholine + H2O = a 1-acyl-sn-glycero-3-phosphocholine + a fatty acid + H(+). PLA2 catalyzes the calcium-dependent hydrolysis of the 2-acyl groups in 3-sn-phosphoglycerides. This Pithecopus azureus (Orange-legged monkey tree frog) protein is Phospholipase A2.